We begin with the raw amino-acid sequence, 1551 residues long: Dual oxidase 1 (1551 aa).

Positions 1 to 21 are cleaved as a signal peptide; it reads MGFCLALAWTLLVGAWTPLGA. Over 22–596 the chain is Extracellular; the sequence is QNPISWEVQR…YFEGSGFGFG (575 aa). The segment at 26 to 593 is peroxidase-like; mediates peroxidase activity; that stretch reads SWEVQRFDGW…VRDYFEGSGF (568 aa). N-linked (GlcNAc...) asparagine glycosylation is present at asparagine 94. The disordered stretch occupies residues 150–172; sequence RWDPETGRSPSNPRDPANQVTGW. Asparagine 342, asparagine 354, asparagine 461, and asparagine 534 each carry an N-linked (GlcNAc...) asparagine glycan. The helical transmembrane segment at 597-617 threads the bilayer; the sequence is VTIGTLCCFPLVSLLSAWIVA. Over 618-1044 the chain is Cytoplasmic; that stretch reads RLRMRNFKRL…KRFIENYRRH (427 aa). EF-hand domains lie at 815 to 850, 851 to 886, and 895 to 930; these read PQDMFVESMFSLADKDGNGYLSFREFLDILVVFMKG, SPEEKSRLMFRMYDFDGNGLISKDEFIRMLRSFIEI, and QLAEVVESMFRESGFQDKEELTWEDFHFMLRDHNSE. 9 residues coordinate Ca(2+): aspartate 828, aspartate 830, asparagine 832, tyrosine 834, glutamate 839, aspartate 864, aspartate 866, asparagine 868, and glutamate 875. The interval 956-1248 is interaction with TXNDC11; that stretch reads YISQDMICPS…GSFALIQLPR (293 aa). The chain crosses the membrane as a helical span at residues 1045 to 1065; sequence IGCVAVFYAIAGGLFLERAYY. Topologically, residues 1066–1080 are extracellular; it reads YAFAAHHTGITDTTR. The helical transmembrane segment at 1081 to 1101 threads the bilayer; the sequence is VGIILSRGTAASISFMFSYIL. The 183-residue stretch at 1087–1269 folds into the Ferric oxidoreductase domain; sequence RGTAASISFM…YGGDKLVSLS (183 aa). Over 1102–1148 the chain is Cytoplasmic; it reads LTMCRNLITFLRETFLNRYVPFDAAVDFHRLIASTAIVLTVLHSVGH. The chain crosses the membrane as a helical span at residues 1149–1171; sequence VVNVYLFSISPLSVLSCLFPGLF. The Extracellular portion of the chain corresponds to 1172-1188; it reads HDDGSELPQKYYWWFFQ. Residues 1189-1209 traverse the membrane as a helical segment; that stretch reads TVPGLTGVVLLLILAIMYVFA. The Cytoplasmic portion of the chain corresponds to 1210–1226; it reads SHHFRRRSFRGFWLTHH. The chain crosses the membrane as a helical span at residues 1227-1247; it reads LYILLYVLLIIHGSFALIQLP. Arginine 1248 is a topological domain (extracellular). The chain crosses the membrane as a helical span at residues 1249–1269; the sequence is FHIFFLVPAIIYGGDKLVSLS. The FAD-binding FR-type domain maps to 1270–1376; sequence RKKVEISVVK…DGPFGEGHQE (107 aa). Residues 1270–1551 are Cytoplasmic-facing; sequence RKKVEISVVK…THFSHHYENF (282 aa).

In the N-terminal section; belongs to the peroxidase family. In terms of assembly, interacts with TXNDC11, TPO and CYBA. N-glycosylated. In terms of tissue distribution, expressed in thyrocytes and tracheal surface epithelial cells (at protein level). Expressed in thyroid, trachea, bronchium, and to a lower extent, in placenta, testis, prostate, pancreas and heart.

It is found in the apical cell membrane. It carries out the reaction NADH + O2 + H(+) = H2O2 + NAD(+). The enzyme catalyses NADPH + O2 + H(+) = H2O2 + NADP(+). Its pathway is hormone biosynthesis; thyroid hormone biosynthesis. Its activity is regulated as follows. The NADPH oxidase activity is calcium-dependent. Peroxidase activity is inhibited by aminobenzohydrazide. Its function is as follows. Generates hydrogen peroxide which is required for the activity of thyroid peroxidase/TPO and lactoperoxidase/LPO. Plays a role in thyroid hormones synthesis and lactoperoxidase-mediated antimicrobial defense at the surface of mucosa. May have its own peroxidase activity through its N-terminal peroxidase-like domain. The sequence is that of Dual oxidase 1 (DUOX1) from Homo sapiens (Human).